Here is a 415-residue protein sequence, read N- to C-terminus: Putative O-antigen transporter (415 aa).

At 1–11 (MNTNKLSLRRN) the chain is on the cytoplasmic side. Residues 12-32 (VIYLAVVQGSNYLLPLLTFPY) traverse the membrane as a helical segment. The Periplasmic portion of the chain corresponds to 33 to 41 (LVRTLGPEN). A helical transmembrane segment spans residues 42–62 (FGIFGFCQATMLYMIMFVEYG). Residues 63–83 (FNLTATQSIAKAADSKDKVTS) lie on the Cytoplasmic side of the membrane. Residues 84 to 104 (IFWAVIFSKIVLIVITLIFLT) traverse the membrane as a helical segment. Residues 105–117 (SMTLLVPEYNKHA) are Periplasmic-facing. A helical membrane pass occupies residues 118 to 138 (VIIWSFVPALVGNLIYPIWLF). Residues 139-173 (QGKEKMKWLTLSSILSRLAIIPLTFIFVNTKSDIA) are Cytoplasmic-facing. A helical membrane pass occupies residues 174–194 (IAGFIQSSANLVAGIIALAIV). The Periplasmic segment spans residues 195–220 (VHEGWIGKVTLSLHNVRRSLADGFHV). The helical transmembrane segment at 221 to 241 (FISTSAISLYSTGIVIILGFI) threads the bilayer. Residues 242-295 (SGPTSVGNFNAANTIRNALQGLLNPITQAIYPRISSTLVLNRVKGVILIKKSLT) lie on the Cytoplasmic side of the membrane. A helical transmembrane segment spans residues 296 to 316 (CLSLIGGAFSLILLLGASILV). The Periplasmic segment spans residues 317–328 (KISIGPGYDNAV). A helical transmembrane segment spans residues 329-349 (IVLMIISPLPFLISLSNVYGI). Over 350 to 362 (QVMLTHNYKKEFS) the chain is Cytoplasmic. Residues 363–383 (KILIAAGLLSLLLIFPLTTLF) traverse the membrane as a helical segment. Over 384 to 385 (KE) the chain is Periplasmic. Residues 386–406 (IGAAITLLATECLVTSLMLMF) traverse the membrane as a helical segment. At 407-415 (VRNNKLLVC) the chain is on the cytoplasmic side.

Belongs to the polysaccharide synthase family.

The protein resides in the cell inner membrane. It functions in the pathway bacterial outer membrane biogenesis; LPS O-antigen biosynthesis. Its function is as follows. May be involved in the translocation process of the nascent O-polysaccharide molecules and/or its ligation to lipid A core units. The chain is Putative O-antigen transporter (rfbX) from Escherichia coli (strain K12).